Here is a 194-residue protein sequence, read N- to C-terminus: Kallikrein-like enzyme LV-Ka (194 aa).

Disulfide bonds link cysteine 7-cysteine 99, cysteine 44-cysteine 192, cysteine 78-cysteine 146, cysteine 110-cysteine 125, and cysteine 136-cysteine 161. A Peptidase S1 domain is found at leucine 36–alanine 185. Serine 140 functions as the Charge relay system in the catalytic mechanism.

Belongs to the peptidase S1 family. Snake venom subfamily. In terms of assembly, monomer. N-glycosylated. In terms of tissue distribution, expressed by the venom gland.

It is found in the secreted. Completely inhibited by the serine protease inhibitors NPGB and PMSF, partially inhibited by benzamidines, and weakly or not inhibited by SBTI and EDTA. Its function is as follows. Shows kallikrein-like activity, releasing bradykinin from kininogen. Also activates plasminogen, which is also a plasma kallikrein activity. Is active upon the kallikrein substrates S-2266 and S-2302, suggesting a preference for Arg in P1 position. In vivo, lowers blood pressure after intravenous injection in rat. The protein is Kallikrein-like enzyme LV-Ka of Lachesis muta muta (Bushmaster).